The primary structure comprises 408 residues: Multidrug resistance protein MdtG (408 aa).

The next 11 membrane-spanning stretches (helical) occupy residues 16–36 (LIVAWLGCFLTGAAFSLVMPF), 58–78 (IVFSITFLFSAIASPFWGGLA), 92–112 (LGMGIVMVLMGLAQNIWQFLI), 115–135 (ALLGLLGGFVPNANALIATQV), 146–166 (TLSTGGVSGALLGPMAGGLLA), 173–193 (PVFFITASVLILCFFVTLFCI), 224–244 (LFVTTLIIQVATGSIAPILTL), 256–276 (VAFISGMIASVPGVAALLSAP), 290–310 (ILITALIFSVLLLIPMSYVQT), 319–339 (FLLGAADGALLPAVQTLLVYN), and 378–398 (AVFLVTAGVVLFNAVYSWNSL).

The protein belongs to the major facilitator superfamily. DHA1 family. MdtG (TC 2.A.1.2.20) subfamily.

Its subcellular location is the cell inner membrane. Functionally, confers resistance to fosfomycin and deoxycholate. The chain is Multidrug resistance protein MdtG from Escherichia coli O6:K15:H31 (strain 536 / UPEC).